A 199-amino-acid polypeptide reads, in one-letter code: Holliday junction branch migration complex subunit RuvA (199 aa).

A domain I region spans residues 1–65; sequence MIASLRGKLL…DRGQRLFGFG (65 aa). A domain II region spans residues 66–144; sequence SKKDRESFEL…KFEMFLNEGT (79 aa). Residues 145 to 155 form a flexible linker region; it reads TESSFVDRETD. The tract at residues 155-199 is domain III; it reads DLATLALIQLGFDEKSATKQVADAKKLNPGLSASDIVKQVITGTR.

The protein belongs to the RuvA family. Homotetramer. Forms an RuvA(8)-RuvB(12)-Holliday junction (HJ) complex. HJ DNA is sandwiched between 2 RuvA tetramers; dsDNA enters through RuvA and exits via RuvB. An RuvB hexamer assembles on each DNA strand where it exits the tetramer. Each RuvB hexamer is contacted by two RuvA subunits (via domain III) on 2 adjacent RuvB subunits; this complex drives branch migration. In the full resolvosome a probable DNA-RuvA(4)-RuvB(12)-RuvC(2) complex forms which resolves the HJ.

The protein localises to the cytoplasm. The RuvA-RuvB-RuvC complex processes Holliday junction (HJ) DNA during genetic recombination and DNA repair, while the RuvA-RuvB complex plays an important role in the rescue of blocked DNA replication forks via replication fork reversal (RFR). RuvA specifically binds to HJ cruciform DNA, conferring on it an open structure. The RuvB hexamer acts as an ATP-dependent pump, pulling dsDNA into and through the RuvAB complex. HJ branch migration allows RuvC to scan DNA until it finds its consensus sequence, where it cleaves and resolves the cruciform DNA. The sequence is that of Holliday junction branch migration complex subunit RuvA from Leptospira biflexa serovar Patoc (strain Patoc 1 / Ames).